Consider the following 56-residue polypeptide: Ribosome biogenesis protein Nop10 (56 aa).

It belongs to the NOP10 family.

Its function is as follows. Involved in ribosome biogenesis; more specifically in 18S rRNA pseudouridylation and in cleavage of pre-rRNA. The polypeptide is Ribosome biogenesis protein Nop10 (Saccharolobus islandicus (strain Y.N.15.51 / Yellowstone #2) (Sulfolobus islandicus)).